Consider the following 317-residue polypeptide: N-acetyl-gamma-glutamyl-phosphate reductase (317 aa).

Residue C136 is part of the active site.

This sequence belongs to the NAGSA dehydrogenase family. Type 1 subfamily.

The protein localises to the cytoplasm. It carries out the reaction N-acetyl-L-glutamate 5-semialdehyde + phosphate + NADP(+) = N-acetyl-L-glutamyl 5-phosphate + NADPH + H(+). It participates in amino-acid biosynthesis; L-arginine biosynthesis; N(2)-acetyl-L-ornithine from L-glutamate: step 3/4. In terms of biological role, catalyzes the NADPH-dependent reduction of N-acetyl-5-glutamyl phosphate to yield N-acetyl-L-glutamate 5-semialdehyde. This is N-acetyl-gamma-glutamyl-phosphate reductase from Stenotrophomonas maltophilia (strain R551-3).